Consider the following 978-residue polypeptide: Transcription factor MYCGRDRAFT_87993 (978 aa).

2 consecutive C2H2-type zinc fingers follow at residues 2-24 (VFCT…ILTH) and 30-52 (FKCF…YTVH). A DNA-binding region (zn(2)-C6 fungal-type) is located at residues 79-105 (CSNCAKTKTKCDKKFPCSRCAGRNLRC). 2 disordered regions span residues 113-231 (ASKN…SPRF) and 426-445 (THRE…PSGA). Over residues 152–165 (SSSPSSQKSGTPIS) the composition is skewed to low complexity. Residues 432–445 (GTSNGSHSPNPSGA) show a composition bias toward polar residues.

The protein resides in the nucleus. Its function is as follows. Transcription factor; part of the gene cluster 29 that mediates the biosynthesis of dihydroxynaphthalene (DHN)-melanin, a bluish-green pigment forming a dark layer in the conidial wall that protects the conidia from UV radiations. This is Transcription factor MYCGRDRAFT_87993 from Zymoseptoria tritici (strain CBS 115943 / IPO323) (Speckled leaf blotch fungus).